Reading from the N-terminus, the 396-residue chain is MAKEKFERKKPHVNVGTIGHVDHGKTTLTAAITTIMAKKYGGTAKAYDQIDAAPEERERGITISTAHVEYESASRHYAHVDCPGHADYVKNMITGAAQMDGAILVVSAADGPMPQTREHILLSRQVGVPYIVVFMNKADMVDDPELLELVEMEVRDLLSSYDFPGDDIPIVVGSALKALEGEDSDIGVKAIEKLVETMDSYIPEPVRNIDKPFLLPIEDVFSISGRGTVVTGRVESGIVKVGEEVEIVGIRDTQKTTCTGVEMFRKLLDEGRAGDNVGVLLRGTKRDEVERGQVLAKPGTIKPHTKFEAEVYVLSKEEGGRHTPFFNGYRPQFYFRTTDVTGTCDLPSGVEMVMPGDNVQLVVSLHAPIAMDEGLRFAIREGGRTVGAGVVAKIIE.

Positions 10 to 206 (KPHVNVGTIG…TMDSYIPEPV (197 aa)) constitute a tr-type G domain. A G1 region spans residues 19–26 (GHVDHGKT). 19-26 (GHVDHGKT) serves as a coordination point for GTP. Thr-26 contributes to the Mg(2+) binding site. A G2 region spans residues 60-64 (GITIS). Positions 81–84 (DCPG) are G3. Residues 81–85 (DCPGH) and 136–139 (NKAD) contribute to the GTP site. The tract at residues 136–139 (NKAD) is G4. The G5 stretch occupies residues 174-176 (SAL).

This sequence belongs to the TRAFAC class translation factor GTPase superfamily. Classic translation factor GTPase family. EF-Tu/EF-1A subfamily. Monomer.

The protein localises to the cytoplasm. It catalyses the reaction GTP + H2O = GDP + phosphate + H(+). GTP hydrolase that promotes the GTP-dependent binding of aminoacyl-tRNA to the A-site of ribosomes during protein biosynthesis. This chain is Elongation factor Tu, found in Legionella pneumophila (strain Paris).